Here is a 309-residue protein sequence, read N- to C-terminus: Xylose/arabinose import permease protein XacI (309 aa).

Transmembrane regions (helical) follow at residues 29–49, 89–109, 121–141, 170–190, 227–247, and 282–302; these read LVVFFLGFFLVPLETGIMTAI, LIMSIPATIGSVLFGSMAAYG, MLMLFVVGVFVPYQAVLVPLA, ELVPLVITHIAYGIPICTILF, MFGVVFIYQFTQIYNEFLFAF, and AAFLAAVPTLILYVAFAEQFA. The ABC transmembrane type-1 domain maps to 85–297; sequence FFNSLIMSIP…VPTLILYVAF (213 aa).

It belongs to the binding-protein-dependent transport system permease family. The complex is composed of two ATP-binding proteins (XacJ and XacK), two transmembrane proteins (XacH and XacI) and a solute-binding protein (XacG).

The protein resides in the cell membrane. In terms of biological role, part of the ABC transporter complex XacGHIJK involved in the uptake of xylose and arabinose. Responsible for the translocation of the substrate across the membrane. The polypeptide is Xylose/arabinose import permease protein XacI (Haloferax volcanii (strain ATCC 29605 / DSM 3757 / JCM 8879 / NBRC 14742 / NCIMB 2012 / VKM B-1768 / DS2) (Halobacterium volcanii)).